The chain runs to 417 residues: Phosphoglycerate kinase (417 aa).

(2R)-3-phosphoglycerate contacts are provided by Val-23, Asp-24, Phe-25, Asn-26, Gln-38, Arg-39, Ser-62, His-63, Gly-65, Arg-66, Leu-121, Arg-122, His-169, and Arg-170. Gly-213 contributes to the ADP binding site. CDP is bound at residue Gly-213. AMP is bound by residues Ala-214 and Lys-215. Ala-214 contributes to the ATP binding site. Position 214 (Ala-214) interacts with Mg(2+). Asp-218 is a binding site for CDP. Position 218 (Asp-218) interacts with Mg(2+). An AMP-binding site is contributed by Lys-219. An ATP-binding site is contributed by Lys-219. Gly-237 serves as a coordination point for ADP. Gly-237 is a binding site for CDP. AMP contacts are provided by Gly-238 and Gly-312. Positions 238 and 312 each coordinate ATP. 2 residues coordinate CDP: Gly-337 and Phe-342. Phe-342 contributes to the ADP binding site. Glu-343 is a binding site for AMP. ATP-binding residues include Glu-343, Asp-374, and Thr-375. A Mg(2+)-binding site is contributed by Asp-374.

The protein belongs to the phosphoglycerate kinase family. In terms of assembly, monomer. It depends on Mg(2+) as a cofactor.

It localises to the cytoplasm. It is found in the mitochondrion. It catalyses the reaction (2R)-3-phosphoglycerate + ATP = (2R)-3-phospho-glyceroyl phosphate + ADP. It functions in the pathway carbohydrate degradation; glycolysis; pyruvate from D-glyceraldehyde 3-phosphate: step 2/5. Catalyzes one of the two ATP producing reactions in the glycolytic pathway via the reversible conversion of 1,3-diphosphoglycerate to 3-phosphoglycerate. Both L- and D- forms of purine and pyrimidine nucleotides can be used as substrates, but the activity is much lower on pyrimidines. Negatively regulates the biosynthesis of acetyl-CoA from pyruvate in the mitochondrion. In Yarrowia lipolytica (strain CLIB 122 / E 150) (Yeast), this protein is Phosphoglycerate kinase (PGK1).